We begin with the raw amino-acid sequence, 793 residues long: MIEALRQQLLDDPRSWYAFLRHLVASQRDSWLYTDLQRACADFREQLPEGYAEGIGPLEDFVAHTQEVIFRDPWMVFAWRPRPGRWIYVRIHREQLALEELSTDAYLQAKEGIVGLGAEGEAVLTVDFRDFRPVSRRLRDESTIGDGLTHLNRRLAGRIFSDLAAGRSQILEFLSLHRLDGQNLMLSNGNTDFDSLRQTVQYLGTLPRETPWAEIREDMRRRGFAPGWGNTAGRVRETMRLLMDLLDSPSPAALESFLDRIPMISRILIVSIHGWFAQDKVLGRPDTGGQVVYILDQARALEREMRNRLRQQGVDVEPRILIATRLIPESDGTTCDQRLEPVVGAENVQILRVPFRYPDGRIHPHWISRFKIWPWLERYAQDLEREVLAELGSRPDLIIGNYSDGNLVATLLSERLGVTQCNIAHALEKSKYLYSDLHWRDHEQDHHFACQFTADLIAMNAADIIVTSTYQEIAGNDREIGQYEGHQDYTLPGLYRVENGIDVFDSKFNIVSPGADPRFYFSYARTEERPSFLEPEIESLLFGREPGADRRGVLEDRQKPLLLSMARMDRIKNLSGLAELYGRSSRLRGLANLVIIGGHVDVGNSRDAEEREEIRRMHEIMDHYQLDGQLRWVGALLDKTVAGELYRVVADGRGVFVQPALFEAFGLTVIEAMSSGLPVFATRFGGPLEIIEDGVSGFHIDPNDHEATAERLADFLEAARERPKYWLEISDAALARVAERYTWERYAERLMTIARIFGFWRFVLDRESQVMERYLQMFRHLQWRPLAHAVPME.

A GT-B glycosyltransferase region spans residues 263-742 (MISRILIVSI…ALARVAERYT (480 aa)).

The protein belongs to the glycosyltransferase 1 family. As to quaternary structure, homotetramer.

It carries out the reaction an NDP-alpha-D-glucose + D-fructose = a ribonucleoside 5'-diphosphate + sucrose + H(+). It catalyses the reaction ADP-alpha-D-glucose + D-fructose = sucrose + ADP + H(+). Its function is as follows. Catalyzes the reversible conversion of sucrose and a nucleotide disphosphate (NDP) into fructose and NDP-glucose; although the reaction is freely reversible in vitro, the physiological reaction seems to be sucrose cleavage. Unlike characterized plant enzymes prefers ADP as a cosubstrate, whereas plants prefer UDP. The KM for sucrose is 45-fold lower in the presence of ADP than UDP. Its preference for ADP over UDP suggests it may directly link sucrose and glycogen metabolism. The sequence is that of Sucrose synthase from Acidithiobacillus caldus (strain ATCC 51756 / DSM 8584 / KU).